The chain runs to 234 residues: Superoxide dismutase [Mn], mitochondrial (234 aa).

The N-terminal 34 residues, 1–34 (MFSIRSSSRVLLKASSATTRATLNAAASKTFTRS), are a transit peptide targeting the mitochondrion. His60, His108, Asp198, and His202 together coordinate Mn(2+).

This sequence belongs to the iron/manganese superoxide dismutase family. Homotetramer. Requires Mn(2+) as cofactor.

It localises to the mitochondrion matrix. It catalyses the reaction 2 superoxide + 2 H(+) = H2O2 + O2. Its function is as follows. Destroys superoxide anion radicals which are normally produced within the cells and which are toxic to biological systems. The sequence is that of Superoxide dismutase [Mn], mitochondrial (SOD2) from Candida albicans (Yeast).